Consider the following 331-residue polypeptide: Ketol-acid reductoisomerase (NADP(+)) (331 aa).

The KARI N-terminal Rossmann domain occupies 2 to 182 (IKKYYDADCN…GAGRAGILET (181 aa)). NADP(+) contacts are provided by residues 25 to 28 (YGSQ), Arg48, and Ser51. His108 is a catalytic residue. Gly134 contributes to the NADP(+) binding site. Residues 183 to 329 (TFREETETDL…AELRKMMSWI (147 aa)) form the KARI C-terminal knotted domain. Residues Asp191, Glu195, Glu227, and Glu231 each contribute to the Mg(2+) site. Substrate is bound at residue Ser252.

This sequence belongs to the ketol-acid reductoisomerase family. The cofactor is Mg(2+).

The catalysed reaction is (2R)-2,3-dihydroxy-3-methylbutanoate + NADP(+) = (2S)-2-acetolactate + NADPH + H(+). It carries out the reaction (2R,3R)-2,3-dihydroxy-3-methylpentanoate + NADP(+) = (S)-2-ethyl-2-hydroxy-3-oxobutanoate + NADPH + H(+). Its pathway is amino-acid biosynthesis; L-isoleucine biosynthesis; L-isoleucine from 2-oxobutanoate: step 2/4. The protein operates within amino-acid biosynthesis; L-valine biosynthesis; L-valine from pyruvate: step 2/4. Functionally, involved in the biosynthesis of branched-chain amino acids (BCAA). Catalyzes an alkyl-migration followed by a ketol-acid reduction of (S)-2-acetolactate (S2AL) to yield (R)-2,3-dihydroxy-isovalerate. In the isomerase reaction, S2AL is rearranged via a Mg-dependent methyl migration to produce 3-hydroxy-3-methyl-2-ketobutyrate (HMKB). In the reductase reaction, this 2-ketoacid undergoes a metal-dependent reduction by NADPH to yield (R)-2,3-dihydroxy-isovalerate. This Brachyspira hyodysenteriae (strain ATCC 49526 / WA1) protein is Ketol-acid reductoisomerase (NADP(+)).